Reading from the N-terminus, the 731-residue chain is 1,4-alpha-glucan branching enzyme GlgB (731 aa).

The active-site Nucleophile is aspartate 411. The Proton donor role is filled by glutamate 464.

It belongs to the glycosyl hydrolase 13 family. GlgB subfamily. In terms of assembly, monomer.

The enzyme catalyses Transfers a segment of a (1-&gt;4)-alpha-D-glucan chain to a primary hydroxy group in a similar glucan chain.. It participates in glycan biosynthesis; glycogen biosynthesis. Its function is as follows. Catalyzes the formation of the alpha-1,6-glucosidic linkages in glycogen by scission of a 1,4-alpha-linked oligosaccharide from growing alpha-1,4-glucan chains and the subsequent attachment of the oligosaccharide to the alpha-1,6 position. In Mycobacterium bovis (strain ATCC BAA-935 / AF2122/97), this protein is 1,4-alpha-glucan branching enzyme GlgB.